A 421-amino-acid chain; its full sequence is ATP-dependent RNA helicase RhlB (421 aa).

Positions 9–37 match the Q motif motif; the sequence is QKFSDFALHPKVVEALEKKGFHNCTPIQA. The region spanning 40–219 is the Helicase ATP-binding domain; that stretch reads LPLTLAGRDV…FEQMNNAEYI (180 aa). 53–60 lines the ATP pocket; the sequence is AQTGTGKT. Positions 165–168 match the DEAD box motif; sequence DEAD. One can recognise a Helicase C-terminal domain in the interval 245–390; it reads RLLQTLIEEE…VSKYNPDALM (146 aa). The segment at 392-421 is disordered; the sequence is DLPKPLRLTRPRTGNGPRRTGTPRNRRRSG. Positions 402–414 are enriched in low complexity; it reads PRTGNGPRRTGTP.

Belongs to the DEAD box helicase family. RhlB subfamily. As to quaternary structure, component of the RNA degradosome, which is a multiprotein complex involved in RNA processing and mRNA degradation.

Its subcellular location is the cytoplasm. The enzyme catalyses ATP + H2O = ADP + phosphate + H(+). In terms of biological role, DEAD-box RNA helicase involved in RNA degradation. Has RNA-dependent ATPase activity and unwinds double-stranded RNA. This chain is ATP-dependent RNA helicase RhlB, found in Escherichia coli O7:K1 (strain IAI39 / ExPEC).